We begin with the raw amino-acid sequence, 271 residues long: Tryptophan synthase alpha chain (271 aa).

Residues Glu49 and Asp60 each act as proton acceptor in the active site.

It belongs to the TrpA family. As to quaternary structure, tetramer of two alpha and two beta chains.

The enzyme catalyses (1S,2R)-1-C-(indol-3-yl)glycerol 3-phosphate + L-serine = D-glyceraldehyde 3-phosphate + L-tryptophan + H2O. It functions in the pathway amino-acid biosynthesis; L-tryptophan biosynthesis; L-tryptophan from chorismate: step 5/5. Functionally, the alpha subunit is responsible for the aldol cleavage of indoleglycerol phosphate to indole and glyceraldehyde 3-phosphate. The protein is Tryptophan synthase alpha chain of Burkholderia lata (strain ATCC 17760 / DSM 23089 / LMG 22485 / NCIMB 9086 / R18194 / 383).